Here is a 130-residue protein sequence, read N- to C-terminus: Transcription antitermination protein NusB (130 aa).

This sequence belongs to the NusB family.

Functionally, involved in transcription antitermination. Required for transcription of ribosomal RNA (rRNA) genes. Binds specifically to the boxA antiterminator sequence of the ribosomal RNA (rrn) operons. In Bacillus anthracis (strain A0248), this protein is Transcription antitermination protein NusB.